The sequence spans 129 residues: Phosphoribosyl-AMP cyclohydrolase (129 aa).

Position 76 (D76) interacts with Mg(2+). Residue C77 participates in Zn(2+) binding. Mg(2+) contacts are provided by D78 and D80. Residues C97 and C104 each contribute to the Zn(2+) site.

This sequence belongs to the PRA-CH family. As to quaternary structure, homodimer. Requires Mg(2+) as cofactor. Zn(2+) serves as cofactor.

The protein resides in the cytoplasm. The enzyme catalyses 1-(5-phospho-beta-D-ribosyl)-5'-AMP + H2O = 1-(5-phospho-beta-D-ribosyl)-5-[(5-phospho-beta-D-ribosylamino)methylideneamino]imidazole-4-carboxamide. It participates in amino-acid biosynthesis; L-histidine biosynthesis; L-histidine from 5-phospho-alpha-D-ribose 1-diphosphate: step 3/9. Functionally, catalyzes the hydrolysis of the adenine ring of phosphoribosyl-AMP. In Albidiferax ferrireducens (strain ATCC BAA-621 / DSM 15236 / T118) (Rhodoferax ferrireducens), this protein is Phosphoribosyl-AMP cyclohydrolase.